The following is a 297-amino-acid chain: XIAP-associated factor 1 (297 aa).

A TRAF-type zinc finger spans residues 22–99; sequence LHEAHCLMYL…QLAVRLNKVD (78 aa). Residues 178–255 form a disordered region; sequence AVTPSPVGKP…NGKLRASSPV (78 aa). Over residues 202–212 the composition is skewed to basic and acidic residues; that stretch reads QTSKAEKDVRP. Residues 229–245 show a composition bias toward polar residues; that stretch reads RQAPRGTNKTTNLSLKS.

As to quaternary structure, interacts with BIRC1, BIRC2, BIRC3, BIRC4, BIRC7 and BIRC8. Part of an complex consisting of BIRC4, XAF1 and BIRC5; the complex formation requires IFN-beta stimulation. Interacts with RNF114, the interaction increases XAF1 stability and proapoptotic effects, and may regulate IFN signaling.

It localises to the cytoplasm. Its subcellular location is the nucleus. It is found in the mitochondrion. Seems to function as a negative regulator of members of the IAP (inhibitor of apoptosis protein) family. Inhibits anti-caspase activity of BIRC4. Induces cleavage and inactivation of BIRC4 independent of caspase activation. Mediates TNF-alpha-induced apoptosis and is involved in apoptosis in trophoblast cells. May inhibit BIRC4 indirectly by activating the mitochondrial apoptosis pathway. After translocation to mitochondria, promotes translocation of BAX to mitochondria and cytochrome c release from mitochondria. Seems to promote the redistribution of BIRC4 from the cytoplasm to the nucleus, probably independent of BIRC4 inactivation which seems to occur in the cytoplasm. The BIRC4-XAF1 complex mediates down-regulation of BIRC5/survivin; the process requires the E3 ligase activity of BIRC4. Seems to be involved in cellular sensitivity to the proapoptotic actions of TRAIL. May be a tumor suppressor by mediating apoptosis resistance of cancer cells. The polypeptide is XIAP-associated factor 1 (XAF1) (Bos taurus (Bovine)).